The primary structure comprises 181 residues: Regulator of G-protein signaling 10 (181 aa).

Residues 1 to 35 (MFTRAVSRLSRKRPPSDIHDGDGSSSSGHQSLKST) form a disordered region. Phosphoserine is present on residues Ser24 and Ser41. Positions 41–156 (SLENLLEDPE…LKSDLFLKPK (116 aa)) constitute an RGS domain. The S-palmitoyl cysteine moiety is linked to residue Cys74. Positions 155–181 (PKRTEEEEEEPPDAQTAAKRASRIYNT) are disordered. At Ser176 the chain carries Phosphoserine.

In terms of assembly, interacts with GNAZ, GNAI1 and GNAI3. Associates specifically with the activated, GTP-bound forms of GNAZ and GNAI3.

It localises to the cytoplasm. It is found in the cytosol. Its subcellular location is the nucleus. In terms of biological role, regulates G protein-coupled receptor signaling cascades, including signaling downstream of the muscarinic acetylcholine receptor CHRM2. Inhibits signal transduction by increasing the GTPase activity of G protein alpha subunits, thereby driving them into their inactive GDP-bound form. Modulates the activity of potassium channels that are activated in response to CHRM2 signaling. Activity on GNAZ is inhibited by palmitoylation of the G-protein. This is Regulator of G-protein signaling 10 (Rgs10) from Mus musculus (Mouse).